A 266-amino-acid polypeptide reads, in one-letter code: 3-methyl-2-oxobutanoate hydroxymethyltransferase (266 aa).

Residues Asp45 and Asp84 each contribute to the Mg(2+) site. 3-methyl-2-oxobutanoate contacts are provided by residues 45–46 (DS), Asp84, and Lys113. Glu115 serves as a coordination point for Mg(2+). Residue Glu183 is the Proton acceptor of the active site.

This sequence belongs to the PanB family. Homodecamer; pentamer of dimers. It depends on Mg(2+) as a cofactor.

It localises to the cytoplasm. It carries out the reaction 3-methyl-2-oxobutanoate + (6R)-5,10-methylene-5,6,7,8-tetrahydrofolate + H2O = 2-dehydropantoate + (6S)-5,6,7,8-tetrahydrofolate. It participates in cofactor biosynthesis; (R)-pantothenate biosynthesis; (R)-pantoate from 3-methyl-2-oxobutanoate: step 1/2. Functionally, catalyzes the reversible reaction in which hydroxymethyl group from 5,10-methylenetetrahydrofolate is transferred onto alpha-ketoisovalerate to form ketopantoate. In Coxiella burnetii (strain Dugway 5J108-111), this protein is 3-methyl-2-oxobutanoate hydroxymethyltransferase.